Reading from the N-terminus, the 413-residue chain is MSTDPTSKPAFPITDEVRHALAVTKRGVDELLIEEEFAQKLAKSAATGKPLRIKLGLDPTAPDIHLGHTVVLNKMRQLQDLGHTVIFLIGDFTSLIGDPSGRNATRPPLTREQIESNAKTYFEQAALVLDREKTEIRYNSEWSMPLGADGMIKLASRYTVARMLEREDFTKRFQGGIPISIHEFLYPLMQGYDSVALNADLELGGTDQKFNLLVGRELQKQYGQEQQCILTMPLLEGLDGVEKMSKSKGNYVGISEKPTDMFGKLMSISDVLMWRYFELLSFRSLDEIARFRGEAEGGRNPRDFKVMLAQEIVARFHSQADAERALEDFNHRAKGGVPDDIPAVTLAGAPLAIGQLLKQAGLVPSTSEALRNIEQGGVKIDGATVSDKALKVDAGEFVVQVGKRRFARVTLTA.

The 'HIGH' region motif lies at 59–68; it reads PTAPDIHLGH. Positions 243 to 247 match the 'KMSKS' region motif; the sequence is KMSKS. Lysine 246 lines the ATP pocket. An S4 RNA-binding domain is found at 351–411; the sequence is LAIGQLLKQA…GKRRFARVTL (61 aa).

It belongs to the class-I aminoacyl-tRNA synthetase family. TyrS type 2 subfamily. In terms of assembly, homodimer.

It localises to the cytoplasm. It catalyses the reaction tRNA(Tyr) + L-tyrosine + ATP = L-tyrosyl-tRNA(Tyr) + AMP + diphosphate + H(+). Its function is as follows. Catalyzes the attachment of tyrosine to tRNA(Tyr) in a two-step reaction: tyrosine is first activated by ATP to form Tyr-AMP and then transferred to the acceptor end of tRNA(Tyr). This is Tyrosine--tRNA ligase from Burkholderia mallei (strain ATCC 23344).